An 819-amino-acid polypeptide reads, in one-letter code: Serine/threonine-protein phosphatase 1 regulatory subunit 10 (819 aa).

Residues 73–147 (KLLNNWLTYA…NDWMAVIRSQ (75 aa)) form the TFIIS N-terminal domain. Disordered regions lie at residues 151-204 (QPAD…KFRS), 296-391 (KIKK…RKTV), and 495-785 (SVPD…GGDM). Basic and acidic residues-rich tracts occupy residues 153–165 (ADKE…EDAK) and 173–190 (KTSE…EKPK). The segment covering 305 to 327 (SPTSNKASPFDSKSPTEASSLTK) has biased composition (polar residues). The short motif at 386-415 (KKRKTVSWPEESRLREYFYFELDETERVNV) is the PP1-binding motif element. Positions 495 to 504 (SVPDTPHEPD) are enriched in basic and acidic residues. Composition is skewed to polar residues over residues 533–543 (MDQSTESQSPD) and 560–578 (MGSS…QEIL). A compositionally biased stretch (basic and acidic residues) spans 589-604 (KPEDLMKQPDFSEKIK). Low complexity predominate over residues 606–618 (LLGSLQNQNQNQG). Pro residues-rich tracts occupy residues 635–663 (FPPP…PGPN) and 670–695 (HGPP…PPPN). Basic and acidic residues-rich tracts occupy residues 704 to 715 (HGGERGGMRGGD) and 758 to 777 (HGDH…GDHR). Residues 785 to 813 (MSTRPTCRHFMMKGNCRYENNCAFYHPGI) form a C3H1-type zinc finger.

As to quaternary structure, component of the PNUTS-PP1 complex (also named PTW/PP1 complex).

The protein resides in the nucleus. It localises to the chromosome. In terms of biological role, substrate-recognition component of the PNUTS-PP1 protein phosphatase complex, a protein phosphatase 1 (PP1) complex that promotes RNA polymerase II transcription pause-release, allowing transcription elongation. Promoter-proximal pausing by RNA polymerase II is a transcription halt following transcription initiation but prior to elongation, which acts as a checkpoint to control that transcripts are favorably configured for transcriptional elongation. The PNUTS-PP1 complex mediates the release of RNA polymerase II from promoter-proximal region of genes by catalyzing dephosphorylation of proteins involved in transcription. In some context, PPP1R10/PNUTS also acts as an inhibitor of protein phosphatase 1 (PP1) activity by preventing access to substrates. This is Serine/threonine-protein phosphatase 1 regulatory subunit 10 (ppp1r10) from Xenopus laevis (African clawed frog).